The chain runs to 342 residues: Isopentenyl-diphosphate delta-isomerase (342 aa).

12–13 provides a ligand contact to substrate; sequence RK. FMN-binding positions include 71-73, serine 101, and asparagine 129; that span reads AMT. 101 to 103 serves as a coordination point for substrate; it reads SQR. Residue glutamine 163 participates in substrate binding. Glutamate 164 provides a ligand contact to Mg(2+). FMN-binding positions include lysine 195, threonine 225, 272–274, and 293–294; these read GIR and AR.

The protein belongs to the IPP isomerase type 2 family. As to quaternary structure, homooctamer. Dimer of tetramers. FMN serves as cofactor. The cofactor is NADPH. Requires Mg(2+) as cofactor.

It localises to the cytoplasm. It catalyses the reaction isopentenyl diphosphate = dimethylallyl diphosphate. Involved in the biosynthesis of isoprenoids. Catalyzes the 1,3-allylic rearrangement of the homoallylic substrate isopentenyl (IPP) to its allylic isomer, dimethylallyl diphosphate (DMAPP). This Mycolicibacterium vanbaalenii (strain DSM 7251 / JCM 13017 / BCRC 16820 / KCTC 9966 / NRRL B-24157 / PYR-1) (Mycobacterium vanbaalenii) protein is Isopentenyl-diphosphate delta-isomerase.